A 339-amino-acid polypeptide reads, in one-letter code: Cyclin-Y-like protein 1-A (339 aa).

A compositionally biased stretch (polar residues) spans 1–13; that stretch reads MGNTVTCCVSPDS. The interval 1-42 is disordered; sequence MGNTVTCCVSPDSSPKEGRDREVTESGEPYQAQGEPQDGDVQ. Positions 14 to 24 are enriched in basic and acidic residues; that stretch reads SPKEGRDREVT. The region spanning 141 to 263 is the Cyclin N-terminal domain; that stretch reads DIFDEKLHPI…FLELLQFNIN (123 aa).

It belongs to the cyclin family. Cyclin Y subfamily.

This chain is Cyclin-Y-like protein 1-A (ccnyl1-a), found in Xenopus laevis (African clawed frog).